The sequence spans 230 residues: Large ribosomal subunit protein uL4 (230 aa).

The segment at 59 to 113 is disordered; sequence RQGTHATKTRGEVSGGGKKPYRQKGTGRARQGSTRAPQFTGGGTVHGPQPRDYSQ.

Belongs to the universal ribosomal protein uL4 family. Part of the 50S ribosomal subunit.

Functionally, one of the primary rRNA binding proteins, this protein initially binds near the 5'-end of the 23S rRNA. It is important during the early stages of 50S assembly. It makes multiple contacts with different domains of the 23S rRNA in the assembled 50S subunit and ribosome. Forms part of the polypeptide exit tunnel. This Nocardia farcinica (strain IFM 10152) protein is Large ribosomal subunit protein uL4.